The primary structure comprises 569 residues: uncharacterized protein (569 aa).

A helical transmembrane segment spans residues 2-22; that stretch reads VVIAALLGSLAVLAFLFYLWY.

The protein resides in the membrane. This is an uncharacterized protein from Mycoplasma pneumoniae (strain ATCC 29342 / M129 / Subtype 1) (Mycoplasmoides pneumoniae).